Reading from the N-terminus, the 213-residue chain is Glutathione S-transferase (213 aa).

The region spanning 4-81 is the GST N-terminal domain; it reads AKPILYGAWI…YLEDKYPQHP (78 aa). The region spanning 86–211 is the GST C-terminal domain; that stretch reads DIKTKGLDLQ…LPQNQPDAPS (126 aa).

This sequence belongs to the GST superfamily. Zeta family.

It is found in the cytoplasm. The catalysed reaction is RX + glutathione = an S-substituted glutathione + a halide anion + H(+). Its function is as follows. Has a glutathione transferase activity with ethacrynic acid and nitrophenyl acetate. Has low glutathione peroxidase activity with cumene hydroperoxide. The protein is Glutathione S-transferase (GSTZ1) of Triticum aestivum (Wheat).